The chain runs to 263 residues: Copper homeostasis protein cutC homolog (263 aa).

This sequence belongs to the CutC family.

Its function is as follows. Involved in copper homeostasis. This chain is Copper homeostasis protein cutC homolog, found in Drosophila melanogaster (Fruit fly).